We begin with the raw amino-acid sequence, 358 residues long: Fructose-bisphosphate aldolase 2, cytoplasmic (358 aa).

A substrate-binding site is contributed by R39. E183 (proton acceptor) is an active-site residue. The active-site Schiff-base intermediate with dihydroxyacetone-P is K225. Substrate-binding positions include 266 to 268 (SGG) and R298.

This sequence belongs to the class I fructose-bisphosphate aldolase family. Homotetramer.

It localises to the cytoplasm. It is found in the cytosol. The catalysed reaction is beta-D-fructose 1,6-bisphosphate = D-glyceraldehyde 3-phosphate + dihydroxyacetone phosphate. It participates in carbohydrate degradation; glycolysis; D-glyceraldehyde 3-phosphate and glycerone phosphate from D-glucose: step 4/4. Its function is as follows. Fructose-bisphosphate aldolase that plays a key role in glycolysis and gluconeogenesis. The sequence is that of Fructose-bisphosphate aldolase 2, cytoplasmic from Oryza sativa subsp. japonica (Rice).